A 726-amino-acid chain; its full sequence is Elongation factor 2 (726 aa).

In terms of domain architecture, tr-type G spans 19 to 260; sequence DRIRNIGICA…MVIKHLPSPP (242 aa). GTP is bound by residues 28–35, 94–98, and 148–151; these read AHIDHGKT, DTPGH, and NKVD. At His-602 the chain carries Diphthamide.

The protein belongs to the TRAFAC class translation factor GTPase superfamily. Classic translation factor GTPase family. EF-G/EF-2 subfamily.

It is found in the cytoplasm. Functionally, catalyzes the GTP-dependent ribosomal translocation step during translation elongation. During this step, the ribosome changes from the pre-translocational (PRE) to the post-translocational (POST) state as the newly formed A-site-bound peptidyl-tRNA and P-site-bound deacylated tRNA move to the P and E sites, respectively. Catalyzes the coordinated movement of the two tRNA molecules, the mRNA and conformational changes in the ribosome. This Methanocaldococcus jannaschii (strain ATCC 43067 / DSM 2661 / JAL-1 / JCM 10045 / NBRC 100440) (Methanococcus jannaschii) protein is Elongation factor 2 (fusA).